Reading from the N-terminus, the 431-residue chain is MAPGLLENNTLSGTAAPRTEFKAIVNDLRELQAHVQRVQSAIEAPEVQSWLNEQLHHPDQLPDKELEQLALDLVDSMDKLQLQLVPSVSLLTDGFFGYLNSKTLWTVVEAQVADRLAENGPQPVSTLGLRCGIQPERLAQLLDTLVSNGIFAYNPADDTYSNNRASLLLCHDHWTQWHLWADLYPNEFFDVSRAMPQAVRLGESRTAAQIAYGTDLDLFEYLAKEQKLAKFQKTLGAGAVAQARGLTVDYPWEEIGSEPILDIGGGSGAFLASLLRAHPHLRGSLMDIQSVIELITPEFREPHGRFSDIGSRVQQLVVGDFTKQIPPSAVYTMKWCLHDWVDDDVLTILKNVRRSIVPSSVSRFLVVESIKSPGRSGRLPRYGDLIMMITCNGKERSLEDWKRLGELAGWKLYQVHRVRRAWPCIIDFRPM.

Positions 20–85 form a coiled coil; the sequence is EFKAIVNDLR…SMDKLQLQLV (66 aa). Residues aspartate 287 and 319–321 each bind S-adenosyl-L-methionine; that span reads GDF. Histidine 338 functions as the Proton acceptor in the catalytic mechanism.

The protein belongs to the class I-like SAM-binding methyltransferase superfamily. Cation-independent O-methyltransferase family. COMT subfamily.

The protein operates within mycotoxin biosynthesis. Functionally, O-methyltransferase; part of the gene cluster that mediates the biosynthesis of gliotoxin, a member of the epipolythiodioxopiperazine (ETP) class of toxins characterized by a disulfide bridged cyclic dipeptide. The first step in gliotoxin biosynthesis is the condensation of serine and phenylalanine to form the cyclo-L-phenylalanyl-L-serine diketopiperazine (DKP) by the NRPS gliP. GliP is also able to produce the DKP cyclo-L-tryptophanyl-L-serine, suggesting that the substrate specificity of the first adenylation (A) domain in gliP is sufficiently relaxed to accommodate both L-Phe and L-Trp. The cytochrome P450 monooxygenase gliC has been shown to catalyze the subsequent hydroxylation of the alpha-carbon of L-Phe in cyclo-L-phenylalanyl-L-serine whereas the second cytochrome P450 enzyme, gliF, is presumably involved in the modification of the DKP side chain. The glutathione S-transferase (GST) gliG then forms a bis-glutathionylated biosynthetic intermediate which is responsible for the sulfurization of gliotoxin. This bis-glutathionylated intermediate is subsequently processed by the gamma-glutamyl cyclotransferase gliK to remove both gamma-glutamyl moieties. Subsequent processing via gliI yields a biosynthetic intermediate, which is N-methylated via the N-methyltransferase gliN, before the gliotoxin oxidoreductase gliT-mediated disulfide bridge closure. GliN-mediated amide methylation confers stability to ETP, damping the spontaneous formation of tri- and tetrasulfides. Intracellular dithiol gliotoxin oxidized by gliT is subsequently effluxed by gliA. Gliotoxin contributes to pathogenesis during invasive aspergillosis. In macrophages and neutrophils, gliotoxin showed inhibition of various different cell functions including cytokine production, antigen presentation, phagocytosis, and production of reactive oxygen species. This Aspergillus fumigatus (strain ATCC MYA-4609 / CBS 101355 / FGSC A1100 / Af293) (Neosartorya fumigata) protein is O-methyltransferase gliM.